Here is a 431-residue protein sequence, read N- to C-terminus: Histidine--tRNA ligase (431 aa).

It belongs to the class-II aminoacyl-tRNA synthetase family. In terms of assembly, homodimer.

It is found in the cytoplasm. It catalyses the reaction tRNA(His) + L-histidine + ATP = L-histidyl-tRNA(His) + AMP + diphosphate + H(+). The sequence is that of Histidine--tRNA ligase (hisS) from Leifsonia xyli subsp. xyli (strain CTCB07).